Consider the following 330-residue polypeptide: Phosphate acyltransferase (330 aa).

The protein belongs to the PlsX family. As to quaternary structure, homodimer. Probably interacts with PlsY.

Its subcellular location is the cytoplasm. It catalyses the reaction a fatty acyl-[ACP] + phosphate = an acyl phosphate + holo-[ACP]. It functions in the pathway lipid metabolism; phospholipid metabolism. Catalyzes the reversible formation of acyl-phosphate (acyl-PO(4)) from acyl-[acyl-carrier-protein] (acyl-ACP). This enzyme utilizes acyl-ACP as fatty acyl donor, but not acyl-CoA. The sequence is that of Phosphate acyltransferase from Lactobacillus delbrueckii subsp. bulgaricus (strain ATCC 11842 / DSM 20081 / BCRC 10696 / JCM 1002 / NBRC 13953 / NCIMB 11778 / NCTC 12712 / WDCM 00102 / Lb 14).